Consider the following 104-residue polypeptide: Large ribosomal subunit protein bL21 (104 aa).

This sequence belongs to the bacterial ribosomal protein bL21 family. Part of the 50S ribosomal subunit. Contacts protein L20.

Its function is as follows. This protein binds to 23S rRNA in the presence of protein L20. The chain is Large ribosomal subunit protein bL21 from Helicobacter hepaticus (strain ATCC 51449 / 3B1).